Consider the following 302-residue polypeptide: N(G),N(G)-dimethylarginine dimethylaminohydrolase (302 aa).

Substrate-binding residues include Asp-102, Arg-127, and Arg-172. His-201 serves as the catalytic Proton donor. Cys-295 (nucleophile) is an active-site residue.

Belongs to the DDAH family.

The catalysed reaction is N(omega),N(omega)-dimethyl-L-arginine + H2O = dimethylamine + L-citrulline. The enzyme catalyses N(omega)-methyl-L-arginine + H2O = L-citrulline + methylamine. In terms of biological role, hydrolyzes N(G),N(G)-dimethyl-L-arginine (ADMA) and N(G)-monomethyl-L-arginine (MMA). The sequence is that of N(G),N(G)-dimethylarginine dimethylaminohydrolase from Mycobacterium tuberculosis (strain ATCC 25618 / H37Rv).